Here is a 246-residue protein sequence, read N- to C-terminus: Carboxymethylenebutenolidase homolog (246 aa).

Residues Cys-132, Asp-179, and His-212 contribute to the active site.

The protein belongs to the dienelactone hydrolase family.

The protein localises to the cytoplasm. It localises to the cytosol. In terms of biological role, cysteine hydrolase. This Xenopus tropicalis (Western clawed frog) protein is Carboxymethylenebutenolidase homolog (cmbl).